The following is a 560-amino-acid chain: Eukaryotic translation initiation factor 3 subunit D-1 (560 aa).

Positions 98–166 are disordered; the sequence is VQKPPHQRGR…RGPPPKMRES (69 aa). Residues 100-121 are compositionally biased toward basic residues; it reads KPPHQRGRFRNMRNSRSGRGRN. At T128 the chain carries Phosphothreonine. The span at 147 to 156 shows a compositional bias: basic residues; sequence GRGMGKKFGH. The segment at 291-305 is RNA gate; the sequence is EFDLLTVNESSVEPP.

Belongs to the eIF-3 subunit D family. As to quaternary structure, component of the eukaryotic translation initiation factor 3 (eIF-3) complex. The eIF-3 complex interacts with pix.

The protein localises to the cytoplasm. Its function is as follows. mRNA cap-binding component of the eukaryotic translation initiation factor 3 (eIF-3) complex, which is involved in protein synthesis of a specialized repertoire of mRNAs and, together with other initiation factors, stimulates binding of mRNA and methionyl-tRNAi to the 40S ribosome. The eIF-3 complex specifically targets and initiates translation of a subset of mRNAs involved in cell proliferation. In the eIF-3 complex, eif3d specifically recognizes and binds the 7-methylguanosine cap of a subset of mRNAs. The protein is Eukaryotic translation initiation factor 3 subunit D-1 of Drosophila sechellia (Fruit fly).